The primary structure comprises 366 residues: Glutamate 5-kinase (366 aa).

K17 lines the ATP pocket. Positions 57, 144, and 156 each coordinate substrate. Residues 176 to 177 (SD) and 216 to 222 (TGGMASK) contribute to the ATP site. Residues 278 to 352 (RGALVLDDGA…GRSTTELPDT (75 aa)) form the PUA domain.

The protein belongs to the glutamate 5-kinase family.

It localises to the cytoplasm. It catalyses the reaction L-glutamate + ATP = L-glutamyl 5-phosphate + ADP. It functions in the pathway amino-acid biosynthesis; L-proline biosynthesis; L-glutamate 5-semialdehyde from L-glutamate: step 1/2. Its function is as follows. Catalyzes the transfer of a phosphate group to glutamate to form L-glutamate 5-phosphate. This chain is Glutamate 5-kinase, found in Nocardia farcinica (strain IFM 10152).